A 1237-amino-acid chain; its full sequence is Glutamate receptor ionotropic, NMDA 2C (1237 aa).

The first 19 residues, 1–19, serve as a signal peptide directing secretion; that stretch reads MGGALGPALLLTSLLGAWA. At 20–554 the chain is on the extracellular side; that stretch reads RLGAGQGEQA…SAFLEPYSPA (535 aa). N-linked (GlcNAc...) asparagine glycans are attached at residues Asn-70 and Asn-73. A disulfide bridge connects residues Cys-82 and Cys-317. 2 N-linked (GlcNAc...) asparagine glycosylation sites follow: Asn-337 and Asn-438. 2 disulfide bridges follow: Cys-426-Cys-453 and Cys-433-Cys-454. Residues Ser-509, Thr-511, and Arg-516 each contribute to the L-glutamate site. An N-linked (GlcNAc...) asparagine glycan is attached at Asn-539. A helical membrane pass occupies residues 555–575; sequence VWVMMFVMCLTVVAITVFMFE. The Cytoplasmic portion of the chain corresponds to 576 to 601; sequence YFSPVSYNQNLTKGKKPGGPSFTIGK. Positions 601–620 are pore-forming; sequence KSVWLLWALVFNNSVPIENP. An intramembrane region (discontinuously helical) is located at residues 602–611; it reads SVWLLWALVF. The Cytoplasmic segment spans residues 612 to 622; the sequence is NNSVPIENPRG. Residues 623–644 traverse the membrane as a helical segment; it reads TTSKIMVLVWAFFAVIFLASYT. The Extracellular segment spans residues 645–813; sequence ANLAAFMIQE…EVMSSKLDID (169 aa). An N-linked (GlcNAc...) asparagine glycan is attached at Asn-685. Positions 687, 688, and 729 each coordinate L-glutamate. A disulfide bridge connects residues Cys-743 and Cys-798. The chain crosses the membrane as a helical span at residues 814 to 833; it reads NMAGVFYMLLVAMGLALLVF. Residues 834–1237 are Cytoplasmic-facing; that stretch reads AWEHLVYWKL…RRVSSLESEV (404 aa). Residues Ser-875, Ser-881, and Ser-912 each carry the phosphoserine modification. Residues 907 to 925 are compositionally biased toward polar residues; it reads ADVSSSLDRATRTIENWGN. Residues 907 to 990 are disordered; sequence ADVSSSLDRA…LPDVSRPSCR (84 aa). Residues 930–941 are compositionally biased toward low complexity; it reads PAPTASGPRSST. Residues 968–982 show a composition bias toward pro residues; that stretch reads PQPPARPATCGPPLP. The short motif at 1235–1237 is the PDZ-binding element; it reads SEV.

Belongs to the glutamate-gated ion channel (TC 1.A.10.1) family. NR2C/GRIN2C subfamily. Heterotetramer. Forms heterotetrameric channels composed of two GluN1/zeta subunits (GRIN1), and two identical GluN2/epsilon subunits (GRIN2A, GRIN2B, GRIN2C or GRIN2D) or GluN3 subunits (GRIN3A or GRIN3B) (in vitro). In vivo, the subunit composition may depend on the expression levels of the different subunits. Interacts with PDZ domains of PATJ and DLG4. Interacts (via PDZ-binding motif) with SNX27 (via PDZ domain); the interaction is required for recycling to the plasma membrane when endocytosed and prevent degradation in lysosomes. Detected in cerebellum.

It is found in the cell membrane. The protein resides in the postsynaptic cell membrane. It carries out the reaction Ca(2+)(in) = Ca(2+)(out). It catalyses the reaction Na(+)(in) = Na(+)(out). The catalysed reaction is K(+)(in) = K(+)(out). Functionally, component of N-methyl-D-aspartate (NMDA) receptors (NMDARs) that function as heterotetrameric, ligand-gated cation channels with high calcium permeability and voltage-dependent block by Mg(2+). Participates in synaptic plasticity for learning and memory formation by contributing to the slow phase of excitatory postsynaptic current and long-term synaptic potentiation. Channel activation requires binding of the neurotransmitter L-glutamate to the GluN2 subunit, glycine or D-serine binding to the GluN1 subunit, plus membrane depolarization to eliminate channel inhibition by Mg(2+). NMDARs mediate simultaneously the potasium efflux and the influx of calcium and sodium. Each GluN2 subunit confers differential attributes to channel properties, including activation, deactivation and desensitization kinetics, pH sensitivity, Ca2(+) permeability, and binding to allosteric modulators. This chain is Glutamate receptor ionotropic, NMDA 2C, found in Rattus norvegicus (Rat).